Here is a 182-residue protein sequence, read N- to C-terminus: Peptidyl-prolyl cis-trans isomerase C, mitochondrial (182 aa).

The N-terminal 20 residues, Met1–Leu20, are a transit peptide targeting the mitochondrion. A PPIase cyclophilin-type domain is found at Phe25–Glu181.

It belongs to the cyclophilin-type PPIase family.

The protein resides in the mitochondrion matrix. It carries out the reaction [protein]-peptidylproline (omega=180) = [protein]-peptidylproline (omega=0). Its activity is regulated as follows. Inhibited by the immunosuppressant drug cyclosporin A and by SDZ NIM811, a PPIase inhibitor. Its function is as follows. PPIases accelerate the folding of proteins. It catalyzes the cis-trans isomerization of proline imidic peptide bonds in oligopeptides. This isozyme is required for growth on lactate at high temperature. The chain is Peptidyl-prolyl cis-trans isomerase C, mitochondrial (CPR3) from Saccharomyces cerevisiae (strain ATCC 204508 / S288c) (Baker's yeast).